Consider the following 327-residue polypeptide: Tartrate-resistant acid phosphatase type 5 (327 aa).

The first 22 residues, 1–22 (MDSWVVLLGLQIIWLPLLTHGT), serve as a signal peptide directing secretion. Positions 35, 73, 76, and 112 each coordinate Fe cation. Asn-118 and Asn-149 each carry an N-linked (GlcNAc...) asparagine glycan. Cys-163 and Cys-221 are joined by a disulfide. Positions 207, 242, and 244 each coordinate Fe cation.

As to quaternary structure, exists either as monomer or, after proteolytic processing, as a dimer of two chains linked by disulfide bond(s). Requires Fe cation as cofactor. In terms of tissue distribution, characteristic constituent of osteoclasts.

It is found in the lysosome. The enzyme catalyses a phosphate monoester + H2O = an alcohol + phosphate. May play a role in the process of bone resorption. The osteoclastic trap acts on nucleotide tri- and diphosphates with higher affinity, compared with other substrates. The protein is Tartrate-resistant acid phosphatase type 5 (Acp5) of Mus musculus (Mouse).